A 327-amino-acid chain; its full sequence is Vacuolar protein sorting-associated protein 26A (327 aa).

Residues 306–327 are disordered; it reads RTNFHQRFESPESQASAEQPEM. Ser315 carries the phosphoserine modification. Positions 316-327 are enriched in polar residues; the sequence is PESQASAEQPEM.

The protein belongs to the VPS26 family. As to quaternary structure, component of the heterotrimeric retromer cargo-selective complex (CSC), also described as vacuolar protein sorting subcomplex (VPS), formed by VPS26 (VPS26A or VPS26B), VPS29 and VPS35. The CSC has a highly elongated structure with VPS26 and VPS29 binding independently at opposite distal ends of VPS35 as central platform. The CSC is believed to associate with variable sorting nexins to form functionally distinct retromer complex variants. The originally described retromer complex (also called SNX-BAR retromer) is a pentamer containing the CSC and a heterodimeric membrane-deforming subcomplex formed between SNX1 or SNX2 and SNX5 or SNX6 (also called SNX-BAR subcomplex); the respective CSC and SNX-BAR subcomplexes associate with low affinity. The CSC associates with SNX3 to form a SNX3-retromer complex. The CSC associates with SNX27, the WASH complex and the SNX-BAR subcomplex to form the SNX27-retromer complex. Interacts with VPS29, VPS35, SNX1, SNX2, SNX5, SNX6, SNX3, SNX27, RAB7A, ECPAS, EHD1, WASHC5, SORL1.

Its subcellular location is the cytoplasm. It is found in the endosome membrane. The protein resides in the early endosome. In terms of biological role, acts as a component of the retromer cargo-selective complex (CSC). The CSC is believed to be the core functional component of retromer or respective retromer complex variants acting to prevent missorting of selected transmembrane cargo proteins into the lysosomal degradation pathway. The recruitment of the CSC to the endosomal membrane involves RAB7A and SNX3. The SNX-BAR retromer mediates retrograde transport of cargo proteins from endosomes to the trans-Golgi network (TGN) and is involved in endosome-to-plasma membrane transport for cargo protein recycling. The SNX3-retromer mediates the retrograde endosome-to-TGN transport of WLS distinct from the SNX-BAR retromer pathway. The SNX27-retromer is believed to be involved in endosome-to-plasma membrane trafficking and recycling of a broad spectrum of cargo proteins. The CSC seems to act as recruitment hub for other proteins, such as the WASH complex and TBC1D5. Required for retrograde transport of lysosomal enzyme receptor IGF2R. Required to regulate transcytosis of the polymeric immunoglobulin receptor (pIgR-pIgA). Required for the endosomal localization of WASHC2A (indicative for the WASH complex). Required for the endosomal localization of TBC1D5. Mediates retromer cargo recognition of SORL1 and is involved in trafficking of SORL1 implicated in sorting and processing of APP. Involved in retromer-independent lysosomal sorting of F2R. Involved in recycling of ADRB2. Enhances the affinity of SNX27 for PDZ-binding motifs in cargo proteins. The sequence is that of Vacuolar protein sorting-associated protein 26A from Homo sapiens (Human).